Reading from the N-terminus, the 179-residue chain is Large ribosomal subunit protein uL6 (179 aa).

This sequence belongs to the universal ribosomal protein uL6 family. Part of the 50S ribosomal subunit.

Its function is as follows. This protein binds to the 23S rRNA, and is important in its secondary structure. It is located near the subunit interface in the base of the L7/L12 stalk, and near the tRNA binding site of the peptidyltransferase center. In Metamycoplasma arthritidis (strain 158L3-1) (Mycoplasma arthritidis), this protein is Large ribosomal subunit protein uL6.